A 329-amino-acid chain; its full sequence is NADH-quinone oxidoreductase subunit H (329 aa).

8 helical membrane-spanning segments follow: residues 11-31 (IVVA…CGAL), 81-101 (LIFT…FAVV), 114-134 (IGLL…LFAG), 154-174 (ISYE…TGSF), 187-207 (TWFI…GVAV), 238-258 (FFVG…TLFF), 270-290 (QLSF…FILL), and 309-329 (FCLP…LAAQ).

This sequence belongs to the complex I subunit 1 family. In terms of assembly, NDH-1 is composed of 13 different subunits. Subunits NuoA, H, J, K, L, M, N constitute the membrane sector of the complex.

It is found in the cell inner membrane. The enzyme catalyses a quinone + NADH + 5 H(+)(in) = a quinol + NAD(+) + 4 H(+)(out). Functionally, NDH-1 shuttles electrons from NADH, via FMN and iron-sulfur (Fe-S) centers, to quinones in the respiratory chain. The immediate electron acceptor for the enzyme in this species is believed to be ubiquinone. Couples the redox reaction to proton translocation (for every two electrons transferred, four hydrogen ions are translocated across the cytoplasmic membrane), and thus conserves the redox energy in a proton gradient. This subunit may bind ubiquinone. This chain is NADH-quinone oxidoreductase subunit H, found in Azotobacter vinelandii (strain DJ / ATCC BAA-1303).